The sequence spans 892 residues: Alanine--tRNA ligase (892 aa).

Zn(2+) is bound by residues His594, His598, Cys702, and His706.

The protein belongs to the class-II aminoacyl-tRNA synthetase family. The cofactor is Zn(2+).

The protein resides in the cytoplasm. The catalysed reaction is tRNA(Ala) + L-alanine + ATP = L-alanyl-tRNA(Ala) + AMP + diphosphate. Catalyzes the attachment of alanine to tRNA(Ala) in a two-step reaction: alanine is first activated by ATP to form Ala-AMP and then transferred to the acceptor end of tRNA(Ala). Also edits incorrectly charged Ser-tRNA(Ala) and Gly-tRNA(Ala) via its editing domain. The chain is Alanine--tRNA ligase from Pyrobaculum aerophilum (strain ATCC 51768 / DSM 7523 / JCM 9630 / CIP 104966 / NBRC 100827 / IM2).